The chain runs to 245 residues: DNA polymerase sliding clamp (245 aa).

This sequence belongs to the PCNA family. In terms of assembly, homotrimer. The subunits circularize to form a toroid; DNA passes through its center. Replication factor C (RFC) is required to load the toroid on the DNA.

Its function is as follows. Sliding clamp subunit that acts as a moving platform for DNA processing. Responsible for tethering the catalytic subunit of DNA polymerase and other proteins to DNA during high-speed replication. The sequence is that of DNA polymerase sliding clamp from Methanococcoides burtonii (strain DSM 6242 / NBRC 107633 / OCM 468 / ACE-M).